The chain runs to 195 residues: Imidazoleglycerol-phosphate dehydratase (195 aa).

Belongs to the imidazoleglycerol-phosphate dehydratase family.

The protein resides in the cytoplasm. The enzyme catalyses D-erythro-1-(imidazol-4-yl)glycerol 3-phosphate = 3-(imidazol-4-yl)-2-oxopropyl phosphate + H2O. Its pathway is amino-acid biosynthesis; L-histidine biosynthesis; L-histidine from 5-phospho-alpha-D-ribose 1-diphosphate: step 6/9. This chain is Imidazoleglycerol-phosphate dehydratase, found in Clostridium botulinum (strain Alaska E43 / Type E3).